Consider the following 1446-residue polypeptide: Sister chromatid cohesion protein PDS5 homolog B (1446 aa).

An HEAT repeat occupies 383-419 (LLVNDHLLNFVRERTLDKRWRVRKEAMMGLAQIYKKY). Residue Lys-1136 is modified to N6-acetyllysine. The span at 1137–1155 (PLSSAGKQSQTKSSRMETV) shows a compositional bias: polar residues. The disordered stretch occupies residues 1137 to 1446 (PLSSAGKQSQ…RRRSSKRERR (310 aa)). Residues Ser-1140, Ser-1162, Ser-1166, Ser-1176, Ser-1182, and Ser-1191 each carry the phosphoserine modification. Residues 1156–1167 (SNASSSSNPSSP) are compositionally biased toward low complexity. Residues 1172–1184 (GRLDSSEMDHSEN) are compositionally biased toward basic and acidic residues. Composition is skewed to basic and acidic residues over residues 1196-1212 (KKSDKREDPDLSELEKP) and 1223-1241 (PEEKLGMDDLTKLVQEQKP). The segment covering 1243–1252 (GSQRGRKRGR) has biased composition (basic residues). The segment at residues 1247 to 1259 (GRKRGRTASDSDE) is a DNA-binding region (a.T hook 1). A Phosphothreonine modification is found at Thr-1253. A phosphoserine mark is found at Ser-1255 and Ser-1257. Residues 1263-1272 (PEEKRHKEEL) show a composition bias toward basic and acidic residues. A Phosphoserine modification is found at Ser-1281. Positions 1285 to 1297 (KGKRGRPPKPLGG) form a DNA-binding region, a.T hook 2. Basic residues-rich tracts occupy residues 1308–1317 (TSKKGNKKKL) and 1339–1351 (SKSKQHRTSKRAQ). Residues 1353–1370 (RAESPETSAVESTQSTPQ) show a composition bias toward polar residues. Residues Ser-1356 and Ser-1364 each carry the phosphoserine modification. Thr-1365 carries the phosphothreonine modification. Ser-1367 bears the Phosphoserine mark. Residue Thr-1368 is modified to Phosphothreonine. Residues 1370-1382 (QKGRGRPSKAPSP) constitute a DNA-binding region (a.T hook 3). A phosphoserine mark is found at Ser-1381, Ser-1415, and Ser-1418. Over residues 1421-1431 (TTQEGAEEEDI) the composition is skewed to acidic residues. Residues 1436–1446 (VRRRSSKRERR) are compositionally biased toward basic residues.

The protein belongs to the PDS5 family. In terms of assembly, interacts with the cohesin complex. Interacts with RAD21; the interaction is direct. Interacts with WAPL (via FGF motifs) or CDCA5 (via the FGF motif); the interaction is direct, cohesin-dependent and competitive. Expressed in prostate.

It localises to the nucleus. Regulator of sister chromatid cohesion in mitosis which may stabilize cohesin complex association with chromatin. May couple sister chromatid cohesion during mitosis to DNA replication. Cohesion ensures that chromosome partitioning is accurate in both meiotic and mitotic cells and plays an important role in DNA repair. Plays a role in androgen-induced proliferative arrest in prostate cells. This is Sister chromatid cohesion protein PDS5 homolog B (Pds5b) from Mus musculus (Mouse).